Here is a 248-residue protein sequence, read N- to C-terminus: DNA repair protein RecO (248 aa).

The protein belongs to the RecO family.

Involved in DNA repair and RecF pathway recombination. The chain is DNA repair protein RecO from Oleidesulfovibrio alaskensis (strain ATCC BAA-1058 / DSM 17464 / G20) (Desulfovibrio alaskensis).